The primary structure comprises 100 residues: uncharacterized protein (100 aa).

Transmembrane regions (helical) follow at residues 17–37 (IIIL…SVSF) and 78–98 (MVDK…TIPF).

It localises to the endoplasmic reticulum membrane. This is an uncharacterized protein from Saccharomyces cerevisiae (strain ATCC 204508 / S288c) (Baker's yeast).